Here is a 530-residue protein sequence, read N- to C-terminus: Cytochrome P450 2U1 (530 aa).

Transmembrane regions (helical) follow at residues Val-21–Trp-41, Val-99–Phe-119, Ile-247–Phe-267, and Leu-328–Leu-348. A heme-binding site is contributed by Cys-476. The helical transmembrane segment at Leu-481 to Leu-501 threads the bilayer.

This sequence belongs to the cytochrome P450 family. The cofactor is heme. Widely expressed. Expressed in heart, brain and liver.

The protein resides in the endoplasmic reticulum membrane. The protein localises to the microsome membrane. It is found in the mitochondrion inner membrane. It catalyses the reaction an omega-methyl-long-chain fatty acid + reduced [NADPH--hemoprotein reductase] + O2 = an omega-hydroxy-long-chain fatty acid + oxidized [NADPH--hemoprotein reductase] + H2O + H(+). The catalysed reaction is (5Z,8Z,11Z,14Z)-eicosatetraenoate + reduced [NADPH--hemoprotein reductase] + O2 = 19-hydroxy-(5Z,8Z,11Z,14Z)-eicosatetraenoate + oxidized [NADPH--hemoprotein reductase] + H2O + H(+). It carries out the reaction (5Z,8Z,11Z,14Z)-eicosatetraenoate + reduced [NADPH--hemoprotein reductase] + O2 = 20-hydroxy-(5Z,8Z,11Z,14Z)-eicosatetraenoate + oxidized [NADPH--hemoprotein reductase] + H2O + H(+). The enzyme catalyses N-[(5Z,8Z,11Z,14Z)-eicosatetraenoyl]-serotonin + reduced [NADPH--hemoprotein reductase] + O2 = 2-oxo-N-[(5Z,8Z,11Z,14Z)-eicosatetraenoyl]-serotonin + oxidized [NADPH--hemoprotein reductase] + H2O + H(+). Its function is as follows. A cytochrome P450 monooxygenase involved in the metabolism of arachidonic acid and its conjugates. Mechanistically, uses molecular oxygen inserting one oxygen atom into a substrate, and reducing the second into a water molecule, with two electrons provided by NADPH via cytochrome P450 reductase (CPR; NADPH-ferrihemoprotein reductase). Acts as an omega and omega-1 hydroxylase for arachidonic acid and possibly for other long chain fatty acids. May modulate the arachidonic acid signaling pathway and play a role in other fatty acid signaling processes. May down-regulate the biological activities of N-arachidonoyl-serotonin, an endocannabinoid that has anti-nociceptive effects through inhibition of fatty acid amide hydrolase FAAH, TRPV1 receptor and T-type calcium channels. Catalyzes C-2 oxidation of the indole ring of N-arachidonoyl-serotonin forming a less active product 2-oxo-N-arachidonoyl-serotonin. This chain is Cytochrome P450 2U1, found in Mus musculus (Mouse).